A 1003-amino-acid polypeptide reads, in one-letter code: cGMP-dependent protein kinase (1003 aa).

Residues 1 to 141 (MGACSSKAQH…KAIKQQEDTQ (141 aa)) are disordered. A lipid anchor (N-myristoyl glycine) is attached at Gly-2. Cys-4 carries S-palmitoyl cysteine lipidation. Residues 69 to 85 (EQQQQQQQQQQQQQEQQ) show a composition bias toward low complexity. 2 stretches are compositionally biased toward basic and acidic residues: residues 86–109 (QHPE…ERKP) and 127–141 (ERKV…EDTQ). CNMP-binding domain stretches follow at residues 173–289 (VCSS…FLAS), 292–391 (FFEM…RVLG), 411–548 (VFAS…ATLG), and 570–669 (IFRY…LQIV). Residues Gly-237, Glu-238, Arg-247, and Thr-248 each coordinate 3',5'-cyclic GMP. Residues Arg-625, Gly-634, Glu-635, Ala-637, Arg-644, and Ser-645 each coordinate 3',5'-cyclic GMP. Residues 693 to 950 (LNVVRVVGRG…YKDIKEHAFF (258 aa)) enclose the Protein kinase domain. ATP is bound by residues 699–707 (VGRGTFGTV) and Lys-722. Catalysis depends on Asp-816, which acts as the Proton acceptor. One can recognise an AGC-kinase C-terminal domain in the interval 951 to 1003 (SDFDWDRLAGRDLSPPLLPKGEIYAEDAEEGGLDIEEDEGIELEDEYEWDKDF).

This sequence belongs to the protein kinase superfamily. AGC Ser/Thr protein kinase family. cGMP subfamily. Monomer. It depends on Mg(2+) as a cofactor.

It localises to the cell membrane. Its subcellular location is the cytoplasm. The catalysed reaction is L-seryl-[protein] + ATP = O-phospho-L-seryl-[protein] + ADP + H(+). The enzyme catalyses L-threonyl-[protein] + ATP = O-phospho-L-threonyl-[protein] + ADP + H(+). Its activity is regulated as follows. Activated by cGMP. The cGMP-binding domains acts cooperatively to activate PKG. Inhibited by the antiparasitic small molecule 4-[2-(4-fluorophenyl)-5-(1-methylpiperidine-4-yl)-1Hpyrrol- 3-yl]pyridine (compound 1). Serine/threonine protein kinase which acts as a downstream effector of the second messenger cGMP. In Eimeria tenella (Coccidian parasite), this protein is cGMP-dependent protein kinase.